Reading from the N-terminus, the 501-residue chain is ADP,ATP carrier protein 3 (501 aa).

Transmembrane regions (helical) follow at residues 23 to 43 (LKLF…FGAL), 59 to 79 (IISL…TVLY), 90 to 110 (YIFY…AYII), 146 to 166 (YALM…LMFW), 183 to 203 (PVLG…LVFF), 227 to 247 (IMLQ…MLLF), 293 to 313 (IALL…PWKA), 326 to 346 (FNFM…FMVI), 361 to 381 (LLTP…IIFI), 383 to 403 (EIGA…VGAI), 446 to 466 (FGKS…PTAT), and 470 to 490 (IIIY…WNVI).

This sequence belongs to the ADP/ATP translocase tlc family.

The protein resides in the cell membrane. Functionally, provides the rickettsial cell with host ATP in exchange for rickettsial ADP. This is an obligate exchange system. This energy acquiring activity is an important component of rickettsial parasitism. This is ADP,ATP carrier protein 3 (tlcC) from Rickettsia felis (strain ATCC VR-1525 / URRWXCal2) (Rickettsia azadi).